Here is a 467-residue protein sequence, read N- to C-terminus: Squalene synthase (467 aa).

It belongs to the phytoene/squalene synthase family. Requires Mg(2+) as cofactor.

The enzyme catalyses 2 (2E,6E)-farnesyl diphosphate + NADPH + H(+) = squalene + 2 diphosphate + NADP(+). It carries out the reaction 2 (2E,6E)-farnesyl diphosphate + NADH + H(+) = squalene + 2 diphosphate + NAD(+). The protein operates within terpene metabolism; lanosterol biosynthesis; lanosterol from farnesyl diphosphate: step 1/3. Its function is as follows. Squalene synthase; part of the third module of ergosterol biosynthesis pathway that includes the late steps of the pathway. The third module or late pathway involves the ergosterol synthesis itself through consecutive reactions that mainly occur in the endoplasmic reticulum (ER) membrane. Firstly, the squalene synthase SQS catalyzes the condensation of 2 farnesyl pyrophosphate moieties to form squalene, which is the precursor of all steroids. Secondly, the squalene epoxidase catalyzes the stereospecific oxidation of squalene to (S)-2,3-epoxysqualene, which is considered to be a rate-limiting enzyme in steroid biosynthesis. Then, the lanosterol synthase LS catalyzes the cyclization of (S)-2,3 oxidosqualene to lanosterol, a reaction that forms the sterol core. In the next steps, lanosterol is transformed to ergosterol via a complex process involving various demethylation, reduction and desaturation reactions. Lanosterol is also an intermediate in the biosynthesis of triterpenes such as ganoderic acids (GA), a group of highly oxygenated lanostane-type triterpenoids which are well recognized as a main group of unique bioactive compounds in the medicinal mushroom Ganoderma lucidum. This is Squalene synthase from Ganoderma lucidum (Ling zhi medicinal fungus).